Here is a 450-residue protein sequence, read N- to C-terminus: MLDKLGQNLSEALNKIKNATFVDKKLVKEVIKDIQKALIQSDVNVKLVFNMSKEIERKAIEEAPPKGFSKKEHIIKIVYDELVKLLGENPQKLELDPSKKSVILLVGIQGSGKTTSSAKLARYIQKKGMKPALIAADIYRPAAYQQLKQLSEKINVPLFGDETKTKTPVEIVKEGIEKLKKSDVLIIDTAGRHKEEESLLEEMKQMKEITNPNEIILVIDGTLGQQAKNQAKAFKDAVSEIGSILVTKLDGSAKGGGALSAVAEINAPIKFIGTGEGVDNLETFDPKKFISRLLGMGDLDSLLEKTEDVMDESTEESIDSILKGKFTLVELYAQLETISKMGPMKQIMGMIPGFGGNMPKEAAQLTEQKLKRYKIMMDSMTMEEKENPELIKTSRLQRIAKGAGVKQDEIKDLLKYYATTKNAFGNLKRGKMPKMGGKMGQIMRQLMYKE.

GTP-binding positions include 107–114 (GIQGSGKT), 188–192 (DTAGR), and 247–250 (TKLD).

The protein belongs to the GTP-binding SRP family. SRP54 subfamily. As to quaternary structure, part of the signal recognition particle protein translocation system, which is composed of SRP and FtsY. Archaeal SRP consists of a 7S RNA molecule of 300 nucleotides and two protein subunits: SRP54 and SRP19.

It is found in the cytoplasm. The catalysed reaction is GTP + H2O = GDP + phosphate + H(+). In terms of biological role, involved in targeting and insertion of nascent membrane proteins into the cytoplasmic membrane. Binds to the hydrophobic signal sequence of the ribosome-nascent chain (RNC) as it emerges from the ribosomes. The SRP-RNC complex is then targeted to the cytoplasmic membrane where it interacts with the SRP receptor FtsY. The polypeptide is Signal recognition particle 54 kDa protein (Methanococcus vannielii (strain ATCC 35089 / DSM 1224 / JCM 13029 / OCM 148 / SB)).